Reading from the N-terminus, the 2467-residue chain is MFRRARLSVKPNVRPGVGTRGSAAPNPQRGPEAPRPPEPATESAPKPAEPTDVPAVDSGGAEPQEQAPGSSDEKTGDKNNAAESSTLSSASSQRRKRVSSTSSLVQPSGSAPSQSRPLSTVDHDAPQPNPTPAKEKQPCSDRYRIYKARKLREMLKEELRKEKKQWKNKFSTNESQRPPDRSKMTMRDFIYYLPDNNPMTSSVEQEKKPEKSLAPTPTRDRQENQSTQDANDNEDVEEEVDDGPLLVPRVKVAEDGSIILDEESLTVEVLRTKGPCVVEENDPIFERGSTTTYSSFRKNYYSKPWSNKETDMFFLAISMVGTDFSMIGQLFPHRARIEIKNKFKREEKTNGWRIDKAFQEKRPFDFDFFAHLLQKVLAEEEKRKQKSTKCQSLKEKASKPRKNLKAKTVTSEEVNDDPDESVNSNISDPERSQNDAETVNEEESPSSSGQHLEQAMLEQDQNQEKKRRRNQGEANKQEATNLLERVLVHSSPPAAEIHKNTCPSEENESECNKEQIPSLTQNIDDIAGLAPSEETEMRMDPIPSTCNQQDIMPLARESSESCAVALPVWEPGNTASADMAHAESSCSEGRGADLKTAAPETEQTENVKPKSRSRLQRPKPNLARAVGKKSAVSQDRQDERNKNSPSETAAEKNHMEKETMNESETSVAKNTDGESPGAKTVSDLSEKSCVQQDSQAKVLRPTRLMRSRMQRPKPNVVKAAERKEILTSQEKFGAHVEKSEDESCVVIPPQTENESHKNLQCEDTVSEPGRKDPFENIQPDQPQVLSDCPSIHEGNKENKRKQVPVLRTRFQKPKPNTGRRRRRISSKEGIPEETPISGEIPATWEEIPSLDTSLREEVLSVPLAPLTATASTKDSESDVKDSGRNDTASNAEMSEMTDVTMEMETGLETIGRDTCPGEMGAEMIDIPMETEAGLKASLNETSCMEKVPELIDTTGEICTNLGETGRKEVFLQENGPKEVGPVSEPETGLQETGKDLAMKESTPDTTDSTEEREAYSEETERQEKISALIKDAEEAKARGEMETPLEEIGGGTSQRGKAAGAPVEQSASEEEPQGSACREEVAVESSTAEGKELNLRETGEDDVSSMVVVLGEKTDIEETNGDPKETERESSVSWERGSGEIQVGEEMVEDLGKPEKIDVAPREREPEEHSSGQPEADVILSSSDGSTGSPQDKVNISSKISVMPTLVEEKETTDKDISSHLGHVESCSQNLGRHETDQGMPLPDALERFSDTNLSKPLPQEQQPLQVKPAPFLRSRFKKPKPNLSRAALKRATIEAEHCVPGKKSEACKVEAAMLQQDSDQAALSPQHNVPSLMASRENDKSGHEEEEEAAILPCTQTEKDASPPNSSEPKEGSQLTPNQENGLLVPIGTPMMNTVTQETRQNVVQTTLPVRGRLQRPRPNVQKARQRQIVEKGEARDIAKNEGPELQKDETRTCLTVANSSHIESGVAVDMSSRVSECQVSESQGHADPVENLSVNKASVVHEQMRHENKPYVPSPALLIRRRFQKAKPNLGGARRKDEQPGVEKGRTDESTALTAEDHLLQKEDCDTQLSLQAREKADMPLEVSVRKECIHSEESGSDRNDAQPNAGPSEGSRDETAKEQPTSLGLEEQSLSKQIRSSCPQLWKESSYPKTVSSRRTPLSSASECEIEHSWKRTQRKTKPNLTKGRGSKRIRGKTAKKEPRASKSVLVTLRASQKEDEDDAEDFDSDYEEETYHLAPEELSKAPVFVPVGLRSPEPVSAQIEETMEELEITMDVADMTVVEHQLSHMDTTAQAVQAEKAVYPPSFEMDVGEQTQEEPGPSDGSTEAAITLLTMGDIVLQSEIIPGQGDVGVCVFPDVHSEDKSHAPFSPDNVNQKVVHDYPEVCSPVISTSHASFEENRIVSKEQSNRDAAVEEEAVEETLPTRNTTSTMSTHLRMESMVVTPELNSEKTLEISESHGHQEVASFCITKETEVEIQRETEGDDSKAVELEDKSHAPVTAAETKEEEQSQCVGDVEGASVSQEAILPARIEDHEETLQEVQESGTAVASSEIGQQTLDSGQSFGESAAKEALKETPKGSDVPVLHGPESVPSHIPEAQQENTGPQAVTVNPFADGQQDGEDEQAFILTLVEIPTHATEGFTDAAMQLMPSSLLPAPILVRSGNAAERGDLSGSLQTSLVVQDAPSLSPSRSGSSEKPPANLDLTSRKRFCCSPDESIHVPPAKKSSLVPGIDYQECTSEVCSEELNVFEKTAESCMGQGIFPTSESTHATSKPQKEHSEPTDTGSSGSLDEIKDACVENMAQLPQSEIVSDKEEKTEPASNSEQRDIVTSSSKPPLTRPGRRPLGFLSLLCPKNSLESDEVTQTHSKKRLKPQIPVSRRNLRKPNLHNTSQKKNQDSSAPPPSPSVTAPLSGTAGSPESSAAQVSSDQPLLKEECKNGPKGAPEEEVTPVSEFVFSDIFIEVDETL.

Disordered regions lie at residues 1 to 145 and 159 to 243; these read MFRR…RYRI and LRKE…VDDG. The interval 1–301 is interaction with ZBTB43; the sequence is MFRRARLSVK…TYSSFRKNYY (301 aa). Over residues 81-92 the composition is skewed to low complexity; the sequence is AAESSTLSSASS. Residues 99–118 are compositionally biased toward polar residues; the sequence is SSTSSLVQPSGSAPSQSRPL. Composition is skewed to basic and acidic residues over residues 133–144 and 177–186; these read AKEKQPCSDRYR and RPPDRSKMTM. A coiled-coil region spans residues 144–177; the sequence is RIYKARKLREMLKEELRKEKKQWKNKFSTNESQR. Over residues 231 to 242 the composition is skewed to acidic residues; sequence NDNEDVEEEVDD. Residues 297–347 enclose the Myb-like domain; the sequence is RKNYYSKPWSNKETDMFFLAISMVGTDFSMIGQLFPHRARIEIKNKFKREE. The segment at 357-472 is required for phosphorylation by CSNK2A1; sequence AFQEKRPFDF…QEKKRRRNQG (116 aa). Disordered stretches follow at residues 380 to 513, 576 to 720, 748 to 844, 866 to 893, 971 to 1200, 1231 to 1270, 1318 to 1388, 1409 to 1448, 1527 to 1561, 1592 to 1706, 1902 to 1926, 1977 to 2014, 2058 to 2083, 2179 to 2206, 2260 to 2290, and 2304 to 2449; these read EEKR…ECNK, SADM…VKAA, PPQT…PATW, LTAT…NAEM, LQEN…SSKI, LGRH…VKPA, DSDQ…LVPI, LPVR…PELQ, KAKP…EDHL, IHSE…RASK, IVSK…LPTR, IQRE…QCVG, LDSG…SDVP, LVVQ…DLTS, GIFP…SGSL, and LPQS…EEVT. Residues 458-487 adopt a coiled-coil conformation; it reads EQDQNQEKKRRRNQGEANKQEATNLLERVL. A compositionally biased stretch (basic and acidic residues) spans 649–660; sequence AAEKNHMEKETM. Residues 809-824 are compositionally biased toward basic residues; it reads RFQKPKPNTGRRRRRI. Basic and acidic residues-rich tracts occupy residues 873-884, 992-1002, 1009-1041, 1089-1098, 1112-1130, and 1150-1170; these read KDSESDVKDSGR, TGKDLAMKEST, TEER…RGEM, EGKELNLRET, EKTD…ERES, and DLGK…EEHS. Composition is skewed to polar residues over residues 1180 to 1200, 1251 to 1265, 1318 to 1330, and 1364 to 1382; these read LSSS…SSKI, DTNL…QQPL, DSDQ…QHNV, and PPNS…NQEN. Basic and acidic residues-rich tracts occupy residues 1429–1448, 1536–1561, and 1592–1603; these read QIVE…PELQ, RRKD…EDHL, and IHSEESGSDRND. Composition is skewed to polar residues over residues 1621-1642 and 1650-1665; these read EQPT…SSCP and YPKT…SSAS. Positions 1688-1697 are enriched in basic residues; it reads RGSKRIRGKT. Basic and acidic residues-rich tracts occupy residues 1902 to 1913, 1977 to 1996, and 2068 to 2078; these read IVSKEQSNRDAA, IQRE…DKSH, and AAKEALKETPK. Over residues 2185–2199 the composition is skewed to low complexity; the sequence is PSLSPSRSGSSEKPP. 3 stretches are compositionally biased toward polar residues: residues 2262–2273, 2319–2334, and 2414–2429; these read FPTSESTHATSK, PASN…SSSK, and TAGS…SSDQ.

In terms of assembly, component of TFIIIB complex. The TFIIIB complex has two activities, alpha and beta. The TFIIIB-alpha and TFIIIB-beta activities are required for transcription of genes with TFIIIC-bound internal promoters and PSE transcription factor-bound external promoters, respectively. The TFIIIB-alpha activity complex is composed of TBP, BDP1, and a complex containing both BRF2 and at least four stably associated proteins; YY1 facilitates the formation of TFIIIB-alpha activity complex. The TFIIIB-beta activity complex is composed of TBP, BDP1, and BRF1. Interacts with BRF1; this interaction diminishes during mitosis resulting in the release of BDP1 from chromosomal templates. Component of TFIIIC complex. The TFIIIC complex has two activities, C1 and C2. The TFIIIC2 activity complex is only required for transcription of the 'classical' pol III genes whereas the TFIIIC1 activity complex is required for transcription of all pol III genes. The TFIIIC1 activity complex is composed at least of BDP1. Interacts with ZBTB43. In terms of processing, phosphorylated by CSNK2A1 during mitosis, resulting in its release from chromatin and suppression of polymerase III transcription. In terms of tissue distribution, expressed in the cochlea, particularly in the spiral ligament, the capillaries of the stria vascularis and the basilar membrane.

Its subcellular location is the nucleus. Functionally, general activator of RNA polymerase III transcription. Requires for transcription from all three types of polymerase III promoters. Requires for transcription of genes with internal promoter elements and with promoter elements upstream of the initiation site. The sequence is that of Transcription factor TFIIIB component B'' homolog (Bdp1) from Mus musculus (Mouse).